We begin with the raw amino-acid sequence, 25 residues long: Caerin-2.2 (25 aa).

It belongs to the frog skin active peptide (FSAP) family. Caerin subfamily. In terms of tissue distribution, expressed by the skin parotoid and/or rostral glands.

It is found in the secreted. In terms of biological role, antimicrobial peptide, that adopts an alpha helical conformation which can disrupt bacterial membranes. Each caerin displays a different antimicrobial specificity. The sequence is that of Caerin-2.2 from Ranoidea caerulea (Green tree frog).